Here is a 367-residue protein sequence, read N- to C-terminus: Cystinosin (367 aa).

Residues 1–22 form the signal peptide; sequence MIRRWLVIFILFPLQLIEKCES. The Lumenal portion of the chain corresponds to 23-125; it reads TVDFSVPPIV…LVIHSNIVSI (103 aa). 5 N-linked (GlcNAc...) asparagine glycosylation sites follow: asparagine 51, asparagine 66, asparagine 84, asparagine 104, and asparagine 107. Residues 123–189 enclose the PQ-loop 1 domain; sequence VSIINQVIGW…LFWVPSIKEQ (67 aa). A helical transmembrane segment spans residues 126–150; it reads INQVIGWIYFVAWSVSFYPQVITNW. Residues 151–159 lie on the Cytoplasmic side of the membrane; it reads RRKSVVGLS. Residues 160-179 form a helical membrane-spanning segment; the sequence is FDFVVLNLMGFVAYSVFNIG. Asparagine 166 provides a ligand contact to L-cystine. The Lumenal segment spans residues 180-202; sequence LFWVPSIKEQFLLKYPNGVNPVD. Residues 203 to 225 form a helical membrane-spanning segment; sequence SNDVFFSLHAVALTLVVIVQCLL. Aspartate 205 is a H(+) binding site. Over 226-234 the chain is Cytoplasmic; sequence YERGSQRVS. Residues 235–257 traverse the membrane as a helical segment; that stretch reads WLAISFLVLSWLFTLIALIMAAV. Over 258 to 263 the chain is Lumenal; it reads GATTWL. The 66-residue stretch at 263 to 328 folds into the PQ-loop 2 domain; sequence LQFLFCFSYI…QSYNNDQWTL (66 aa). Residues 264–289 traverse the membrane as a helical segment; sequence QFLFCFSYIKLAVTLVKYFPQAYMNF. Positions 273, 280, and 281 each coordinate L-cystine. The Cytoplasmic portion of the chain corresponds to 290–298; it reads HYKSTEGWS. The chain crosses the membrane as a helical span at residues 299 to 308; the sequence is IGNVLLDFTG. Residues asparagine 301 and aspartate 305 each coordinate L-cystine. Residue aspartate 305 coordinates H(+). Topologically, residues 309–331 are lumenal; the sequence is GSFSLLQMFLQSYNNDQWTLIFG. The helical transmembrane segment at 332-354 threads the bilayer; it reads DPTKFGLGIFSIIFDVVFFIQHF. Aspartate 346 is a binding site for H(+). The Cytoplasmic segment spans residues 355–367; that stretch reads CLYRKKPGYDQLN. The Lysosomal targeting motif signature appears at 362–366; the sequence is GYDQL.

This sequence belongs to the cystinosin family. As to quaternary structure, interacts with components of the V-ATPase complex. Interacts with components of the Ragulator complex. Interacts with RRAGA/RagA and RRAGC/RagC. Interacts with AP-3 complex subunit mu (AP3M1 or AP3M2).

It is found in the lysosome membrane. It localises to the melanosome membrane. The enzyme catalyses L-cystine(out) + H(+)(out) = L-cystine(in) + H(+)(in). Switches between a lumen- and a cytosol-open conformation: pH induces conformational changes and shifts the equilibrium to facilitate the transition between the lumen- and cytosol-open conformation, thereby promoting cystine transport. Protonation of specific aspartate residues (Asp-205, Asp-305 and Asp-346) favors the cytosol-open conformation. Functionally, cystine/H(+) symporter that mediates export of cystine, the oxidized dimer of cysteine, from lysosomes. Plays an important role in melanin synthesis by catalyzing cystine export from melanosomes, possibly by inhibiting pheomelanin synthesis. In addition to cystine export, also acts as a positive regulator of mTORC1 signaling in kidney proximal tubular cells, via interactions with components of the v-ATPase and Ragulator complexes. Also involved in small GTPase-regulated vesicle trafficking and lysosomal localization of LAMP2A, independently of cystine transporter activity. In Bos taurus (Bovine), this protein is Cystinosin.